Consider the following 761-residue polypeptide: MGKNRKSKRQLVRDEKRAKKRGLEIEHEEERDIKKQRREEEAHQDAFAPVTDAGYVPPPLDGTYDENAFPGGPEEGRRNGPNTNFEREFFGMLAEQEQEYFRHADELLELNDFPSTEERDIFLQNVYKELRGKELKVASSQSCSRLMERLILLSNTRQKKSLFDAFGGHFISLVTHRFASHCCEKLFLQSAPVVTQELSGEYEQEPLPEGEEETEAMKSSMEDLFLLTLDELEEHLGYLLTDRFGSHAIRALLVILSGRPLDQAGTKSMLQSRKKEYITVEGAAANQSELSSQIRAVPSSFTMAIKKIIDDSTMTMDATALRVLAKHPTGNPTLQLLLELELTMFVKGKEKKEKNKQKKDDEEAEEKKEETQSEVTLLGMLVPDAPAAFADNTTQAAEFVNSMIYDPIGSRLLETLITHCPGKIFKGLQQHIFGPRIQSLLRNDIACYPAIKVLNRLSREDLADAVEKSLPEMASFVDKGRFNVIRTLFERCHIRNGTDEINALLKALTSAYGNDWKKLVPKLCMLDEDVVEEEQKPDPKFQTQEAKNKAFMLNHGCQLVAALLAIPGQPSKAIQASLAALKPAQVMKMATTSHNTSSILVKALQTPATNPTFHKVLVSSLLPHVYELATSQQGSAVLNEIISLPSKPAEPNAPAVPFHMKENIISQLANYESELRETWLGRNVWRTWKGDMWSHRRHDWVRWAKETDPETARVAAIPRKREEKEKEEAEKKPKGYLGKNFDPKKLKGFAAKKFEKKEAEA.

Residues 1–10 are compositionally biased toward basic residues; that stretch reads MGKNRKSKRQ. The tract at residues 1-56 is disordered; sequence MGKNRKSKRQLVRDEKRAKKRGLEIEHEEERDIKKQRREEEAHQDAFAPVTDAGYV. Basic and acidic residues predominate over residues 11-44; sequence LVRDEKRAKKRGLEIEHEEERDIKKQRREEEAHQ. 3 Pumilio repeats span residues 129–164, 165–200, and 231–271; these read ELRG…SLFD, AFGG…ELSG, and ELEE…SMLQ. Basic and acidic residues predominate over residues 350–371; the sequence is EKKEKNKQKKDDEEAEEKKEET. The tract at residues 350 to 372 is disordered; it reads EKKEKNKQKKDDEEAEEKKEETQ. 3 Pumilio repeats span residues 395-430, 432-467, and 620-666; these read QAAE…GLQQ, IFGP…DAVE, and SLLP…NIIS. The segment at 712–739 is disordered; that stretch reads ARVAAIPRKREEKEKEEAEKKPKGYLGK. Residues 719 to 733 show a composition bias toward basic and acidic residues; the sequence is RKREEKEKEEAEKKP.

The protein belongs to the NOP9 family.

It localises to the nucleus. It is found in the nucleolus. Functionally, RNA-binding nucleolar protein required for pre-rRNA processing. Involved in production of 18S rRNA and assembly of small ribosomal subunit. The chain is Nucleolar protein 9 (NOP9) from Sordaria macrospora (strain ATCC MYA-333 / DSM 997 / K(L3346) / K-hell).